A 540-amino-acid polypeptide reads, in one-letter code: Chaperonin GroEL (540 aa).

Residues 30 to 33, lysine 51, 87 to 91, glycine 415, and aspartate 495 each bind ATP; these read TLGP and DGTTT.

This sequence belongs to the chaperonin (HSP60) family. In terms of assembly, forms a cylinder of 14 subunits composed of two heptameric rings stacked back-to-back. Interacts with the co-chaperonin GroES.

The protein resides in the cytoplasm. The enzyme catalyses ATP + H2O + a folded polypeptide = ADP + phosphate + an unfolded polypeptide.. In terms of biological role, together with its co-chaperonin GroES, plays an essential role in assisting protein folding. The GroEL-GroES system forms a nano-cage that allows encapsulation of the non-native substrate proteins and provides a physical environment optimized to promote and accelerate protein folding. This Serratia ficaria protein is Chaperonin GroEL.